Here is a 72-residue protein sequence, read N- to C-terminus: Sperm protein associated with the nucleus on the X chromosome N1 (72 aa).

The interval methionine 1 to lysine 44 is disordered.

Belongs to the SPAN-X family.

The protein is Sperm protein associated with the nucleus on the X chromosome N1 (SPANXN1) of Homo sapiens (Human).